A 75-amino-acid polypeptide reads, in one-letter code: Sec-independent protein translocase protein TatA (75 aa).

A helical transmembrane segment spans residues 1–21 (MGGFSIWHWLIVLVIVLLVFG). The tract at residues 41–75 (KGMHDDDKPAGKLGDDSRTAEQAREAQAERDRDAR) is disordered.

Belongs to the TatA/E family. The Tat system comprises two distinct complexes: a TatABC complex, containing multiple copies of TatA, TatB and TatC subunits, and a separate TatA complex, containing only TatA subunits. Substrates initially bind to the TatABC complex, which probably triggers association of the separate TatA complex to form the active translocon.

It localises to the cell inner membrane. Functionally, part of the twin-arginine translocation (Tat) system that transports large folded proteins containing a characteristic twin-arginine motif in their signal peptide across membranes. TatA could form the protein-conducting channel of the Tat system. The chain is Sec-independent protein translocase protein TatA from Xanthomonas axonopodis pv. citri (strain 306).